A 225-amino-acid polypeptide reads, in one-letter code: Glutathione S-transferase-like protein tpcF (225 aa).

The 82-residue stretch at 4 to 85 folds into the GST N-terminal domain; it reads IQPITVYGKG…YLVSHYDPDH (82 aa). The GST C-terminal domain occupies 92–225; the sequence is GSNLAALATQ…KGMADIFPST (134 aa).

The protein belongs to the GST superfamily. In terms of tissue distribution, specifically expressed in conidia.

Its pathway is secondary metabolite biosynthesis. Glutathione S-transferase-like protein; part of the gene cluster that mediates the biosynthesis of trypacidin, a mycotoxin with antiprotozoal activity and that plays a role in the infection process. The pathway begins with the synthesis of atrochrysone thioester by the polyketide synthase (PKS) tpcC. The atrochrysone carboxyl ACP thioesterase tpcB then breaks the thioester bond and releases the atrochrysone carboxylic acid from tpcC. The decarboxylase tpcK converts atrochrysone carboxylic acid to atrochrysone which is further reduced into emodin anthrone. The next step is performed by the emodin anthrone oxygenase tpcL that catalyzes the oxidation of emodinanthrone to emodin. Emodin O-methyltransferase encoded by tpcA catalyzes methylation of the 8-hydroxy group of emodin to form questin. Ring cleavage of questin by questin oxidase tpcI leads to desmethylsulochrin via several intermediates including questin epoxide. Another methylation step catalyzed by tpcM leads to the formation of sulochrin which is further converted to monomethylsulfochrin by tpcH. Finally, the tpcJ catalyzes the conversion of monomethylsulfochrin to trypacidin. Trypacidin is toxic for human pulmonary and bronchial epithelial cells by initiating the intracellular formation of nitric oxide (NO) and hydrogen peroxide (H(2)O(2)), thus triggering host necrotic cell death. The trypacidin pathway is also able to produce endocrocin via a distinct route from the endocrocin Enc pathway. This chain is Glutathione S-transferase-like protein tpcF, found in Aspergillus fumigatus (strain ATCC MYA-4609 / CBS 101355 / FGSC A1100 / Af293) (Neosartorya fumigata).